We begin with the raw amino-acid sequence, 438 residues long: Xylose isomerase (438 aa).

Catalysis depends on residues H100 and D103. E231, E267, H270, D295, D306, D308, and D338 together coordinate Mg(2+).

The protein belongs to the xylose isomerase family. As to quaternary structure, homotetramer. The cofactor is Mg(2+).

It is found in the cytoplasm. The catalysed reaction is alpha-D-xylose = alpha-D-xylulofuranose. The polypeptide is Xylose isomerase (Caldanaerobacter subterraneus subsp. yonseiensis (Thermoanaerobacter yonseiensis)).